The primary structure comprises 1076 residues: DNA-directed RNA polymerase subunit beta (1076 aa).

It belongs to the RNA polymerase beta chain family. As to quaternary structure, in plastids the minimal PEP RNA polymerase catalytic core is composed of four subunits: alpha, beta, beta', and beta''. When a (nuclear-encoded) sigma factor is associated with the core the holoenzyme is formed, which can initiate transcription.

The protein resides in the plastid. It carries out the reaction RNA(n) + a ribonucleoside 5'-triphosphate = RNA(n+1) + diphosphate. Its function is as follows. DNA-dependent RNA polymerase catalyzes the transcription of DNA into RNA using the four ribonucleoside triphosphates as substrates. The protein is DNA-directed RNA polymerase subunit beta of Euglena longa (Euglenophycean alga).